We begin with the raw amino-acid sequence, 189 residues long: MASKRALVILAKGAEEMETVIPVDVMRRAGIKVTVAGLAGKDPVQCSRDVMICPDTSLEDAKTQGPYDVVVLPGGNLGAQNLSESPMVKEILKEQESRKGLIAAICAGPTALLAHEVGFGCKVTTHPLAKDKMMNGSHYSYSESRVEKDGLILTSRGPGTSFEFALAIVEALVGKDMANQVKAPLVLKD.

A2 is subject to N-acetylalanine. Residues C46 and C53 are each lipidated (S-palmitoyl cysteine). Position 67 is a phosphotyrosine (Y67). The active-site Nucleophile is C106. Cysteine sulfinic acid (-SO2H); alternate is present on C106. C106 is lipidated: S-palmitoyl cysteine; alternate. H126 is a catalytic residue. Residue K130 forms a Glycyl lysine isopeptide (Lys-Gly) (interchain with G-Cter in SUMO) linkage. K148 carries the post-translational modification N6-acetyllysine. K182 bears the N6-succinyllysine mark.

Belongs to the peptidase C56 family. In terms of assembly, homodimer. Binds EFCAB6/DJBP and PIAS2. Part of a ternary complex containing PARK7, EFCAB6/DJBP and AR. Binds to HIPK1. Interacts (via N-terminus) with OTUD7B. Interacts with BBS1, CLCF1 and MTERF. Interacts (via C-terminus) with NCF1; the interaction is enhanced by LPS and modulates NCF1 phosphorylation and membrane translocation. Interacts with NENF. Deglycase activity does not require glutathione as a cofactor, however, glycated glutathione constitutes a PARK7 substrate. is required as a cofactor. Post-translationally, sumoylated on Lys-130 by PIAS2 or PIAS4; which is essential for cell-growth promoting activity and transforming activity. Undergoes cleavage of a C-terminal peptide and subsequent activation of protease activity in response to oxidative stress. In terms of tissue distribution, expressed in erythroblasts and in mature red blood cells from peripheral blood (at protein level). In pancreas, expression is higher in islets than surrounding exocrine tissues.

It localises to the cell membrane. Its subcellular location is the cytoplasm. The protein resides in the membrane raft. It is found in the nucleus. The protein localises to the mitochondrion. It localises to the endoplasmic reticulum. It carries out the reaction N(omega)-(1-hydroxy-2-oxopropyl)-L-arginyl-[protein] + H2O = lactate + L-arginyl-[protein] + H(+). It catalyses the reaction N(6)-(1-hydroxy-2-oxopropyl)-L-lysyl-[protein] + H2O = lactate + L-lysyl-[protein] + H(+). The enzyme catalyses S-(1-hydroxy-2-oxopropyl)-L-cysteinyl-[protein] + H2O = lactate + L-cysteinyl-[protein] + H(+). The catalysed reaction is N(omega)-(1-hydroxy-2-oxoethyl)-L-arginyl-[protein] + H2O = L-arginyl-[protein] + glycolate + H(+). It carries out the reaction N(6)-(1-hydroxy-2-oxoethyl)-L-lysyl-[protein] + H2O = glycolate + L-lysyl-[protein] + H(+). It catalyses the reaction S-(1-hydroxy-2-oxoethyl)-L-cysteinyl-[protein] + H2O = glycolate + L-cysteinyl-[protein] + H(+). The enzyme catalyses N(2)-(1-hydroxy-2-oxopropyl)-dGTP + H2O = lactate + dGTP + H(+). The catalysed reaction is N(2)-(1-hydroxy-2-oxopropyl)-GTP + H2O = lactate + GTP + H(+). It carries out the reaction N(2)-(1-hydroxy-2-oxopropyl)-GDP + H2O = lactate + GDP + H(+). It catalyses the reaction N(2)-(1-hydroxy-2-oxopropyl)-GMP + H2O = lactate + GMP + H(+). The enzyme catalyses N(2)-(1-hydroxy-2-oxoethyl)-dGTP + H2O = dGTP + glycolate + H(+). The catalysed reaction is N(2)-(1-hydroxy-2-oxoethyl)-GTP + H2O = glycolate + GTP + H(+). It carries out the reaction N(2)-(1-hydroxy-2-oxoethyl)-GDP + H2O = glycolate + GDP + H(+). It catalyses the reaction N(2)-(1-hydroxy-2-oxoethyl)-GMP + H2O = glycolate + GMP + H(+). The enzyme catalyses an N(2)-(1-hydroxy-2-oxopropyl)-guanosine in RNA + H2O = a guanosine in RNA + lactate + H(+). The catalysed reaction is an N(2)-(1-hydroxy-2-oxopropyl)-2'-deoxyguanosine in DNA + H2O = a 2'-deoxyguanosine in DNA + lactate + H(+). It carries out the reaction an N(2)-(1-hydroxy-2-oxoethyl)-guanosine in RNA + H2O = a guanosine in RNA + glycolate + H(+). It catalyses the reaction an N(2)-(1-hydroxy-2-oxoethyl)-2'-deoxyguanosine in DNA + H2O = a 2'-deoxyguanosine in DNA + glycolate + H(+). Functionally, multifunctional protein with controversial molecular function which plays an important role in cell protection against oxidative stress and cell death acting as oxidative stress sensor and redox-sensitive chaperone and protease. It is involved in neuroprotective mechanisms like the stabilization of NFE2L2 and PINK1 proteins, male fertility as a positive regulator of androgen signaling pathway as well as cell growth and transformation through, for instance, the modulation of NF-kappa-B signaling pathway. Has been described as a protein and nucleotide deglycase that catalyzes the deglycation of the Maillard adducts formed between amino groups of proteins or nucleotides and reactive carbonyl groups of glyoxals. But this function is rebuted by other works. As a protein deglycase, repairs methylglyoxal- and glyoxal-glycated proteins, and releases repaired proteins and lactate or glycolate, respectively. Deglycates cysteine, arginine and lysine residues in proteins, and thus reactivates these proteins by reversing glycation by glyoxals. Acts on early glycation intermediates (hemithioacetals and aminocarbinols), preventing the formation of advanced glycation endproducts (AGE) that cause irreversible damage. Also functions as a nucleotide deglycase able to repair glycated guanine in the free nucleotide pool (GTP, GDP, GMP, dGTP) and in DNA and RNA. Is thus involved in a major nucleotide repair system named guanine glycation repair (GG repair), dedicated to reversing methylglyoxal and glyoxal damage via nucleotide sanitization and direct nucleic acid repair. Protects histones from adduction by methylglyoxal, controls the levels of methylglyoxal-derived argininine modifications on chromatin. Able to remove the glycations and restore histone 3, histone glycation disrupts both local and global chromatin architecture by altering histone-DNA interactions as well as histone acetylation and ubiquitination levels. Displays a very low glyoxalase activity that may reflect its deglycase activity. Eliminates hydrogen peroxide and protects cells against hydrogen peroxide-induced cell death. Required for correct mitochondrial morphology and function as well as for autophagy of dysfunctional mitochondria. Plays a role in regulating expression or stability of the mitochondrial uncoupling proteins SLC25A14 and SLC25A27 in dopaminergic neurons of the substantia nigra pars compacta and attenuates the oxidative stress induced by calcium entry into the neurons via L-type channels during pacemaking. Regulates astrocyte inflammatory responses, may modulate lipid rafts-dependent endocytosis in astrocytes and neuronal cells. In pancreatic islets, involved in the maintenance of mitochondrial reactive oxygen species (ROS) levels and glucose homeostasis in an age- and diet dependent manner. Protects pancreatic beta cells from cell death induced by inflammatory and cytotoxic setting. Binds to a number of mRNAs containing multiple copies of GG or CC motifs and partially inhibits their translation but dissociates following oxidative stress. Metal-binding protein able to bind copper as well as toxic mercury ions, enhances the cell protection mechanism against induced metal toxicity. In macrophages, interacts with the NADPH oxidase subunit NCF1 to direct NADPH oxidase-dependent ROS production, and protects against sepsis. This chain is Parkinson disease protein 7 homolog, found in Mus musculus (Mouse).